The sequence spans 149 residues: Transcription antitermination protein NusB (149 aa).

It belongs to the NusB family.

Its function is as follows. Involved in transcription antitermination. Required for transcription of ribosomal RNA (rRNA) genes. Binds specifically to the boxA antiterminator sequence of the ribosomal RNA (rrn) operons. The polypeptide is Transcription antitermination protein NusB (Acinetobacter baumannii (strain SDF)).